The chain runs to 313 residues: Methionyl-tRNA formyltransferase (313 aa).

112 to 115 is a binding site for (6S)-5,6,7,8-tetrahydrofolate; it reads SLLP.

This sequence belongs to the Fmt family.

The enzyme catalyses L-methionyl-tRNA(fMet) + (6R)-10-formyltetrahydrofolate = N-formyl-L-methionyl-tRNA(fMet) + (6S)-5,6,7,8-tetrahydrofolate + H(+). Its function is as follows. Attaches a formyl group to the free amino group of methionyl-tRNA(fMet). The formyl group appears to play a dual role in the initiator identity of N-formylmethionyl-tRNA by promoting its recognition by IF2 and preventing the misappropriation of this tRNA by the elongation apparatus. This Geotalea uraniireducens (strain Rf4) (Geobacter uraniireducens) protein is Methionyl-tRNA formyltransferase.